We begin with the raw amino-acid sequence, 269 residues long: Chymotrypsin-like elastase family member 2B (269 aa).

The first 16 residues, 1-16 (MIRTLLLSTLVAGALS), serve as a signal peptide directing secretion. Positions 17–28 (CGVSTYAPDMSR) are cleaved as a propeptide — activation peptide. Residues 29 to 267 (MLGGEEARPN…YNDWINSVIA (239 aa)) form the Peptidase S1 domain. Cysteines 58 and 74 form a disulfide. Catalysis depends on charge relay system residues H73 and D121. 3 disulfides stabilise this stretch: C155–C222, C186–C202, and C212–C243. The active-site Charge relay system is the S216.

The protein belongs to the peptidase S1 family. Elastase subfamily. Pancreas.

It localises to the secreted. It catalyses the reaction Preferential cleavage: Leu-|-Xaa, Met-|-Xaa and Phe-|-Xaa. Hydrolyzes elastin.. Acts upon elastin. This Homo sapiens (Human) protein is Chymotrypsin-like elastase family member 2B (CELA2B).